Consider the following 349-residue polypeptide: Ferredoxin--NADP reductase 1 (349 aa).

Positions 36, 44, 48, 88, 123, 290, and 331 each coordinate FAD.

This sequence belongs to the ferredoxin--NADP reductase type 2 family. Homodimer. It depends on FAD as a cofactor.

The catalysed reaction is 2 reduced [2Fe-2S]-[ferredoxin] + NADP(+) + H(+) = 2 oxidized [2Fe-2S]-[ferredoxin] + NADPH. This is Ferredoxin--NADP reductase 1 from Lysinibacillus sphaericus (strain C3-41).